The following is a 258-amino-acid chain: Tryptophan synthase alpha chain (258 aa).

Catalysis depends on proton acceptor residues Glu47 and Asp58.

The protein belongs to the TrpA family. As to quaternary structure, tetramer of two alpha and two beta chains.

It catalyses the reaction (1S,2R)-1-C-(indol-3-yl)glycerol 3-phosphate + L-serine = D-glyceraldehyde 3-phosphate + L-tryptophan + H2O. It functions in the pathway amino-acid biosynthesis; L-tryptophan biosynthesis; L-tryptophan from chorismate: step 5/5. Its function is as follows. The alpha subunit is responsible for the aldol cleavage of indoleglycerol phosphate to indole and glyceraldehyde 3-phosphate. The protein is Tryptophan synthase alpha chain of Bacillus cereus (strain B4264).